The primary structure comprises 452 residues: Adenylyltransferase and sulfurtransferase MOCS3 (452 aa).

Residues Gly-99, Asp-120, 127–131, Lys-144, and 188–189 each bind ATP; these read SNLHR and DN. Zn(2+)-binding residues include Cys-230 and Cys-233. Cys-247 serves as the catalytic Glycyl thioester intermediate; for adenylyltransferase activity. Positions 305 and 308 each coordinate Zn(2+). One can recognise a Rhodanese domain in the interval 354 to 450; it reads KTKAHLLLDV…WTNQVDQSFP (97 aa). Cys-409 (cysteine persulfide intermediate; for sulfurtransferase activity) is an active-site residue.

This sequence in the N-terminal section; belongs to the HesA/MoeB/ThiF family. UBA4 subfamily. Requires Zn(2+) as cofactor.

It localises to the cytoplasm. It is found in the cytosol. The enzyme catalyses [molybdopterin-synthase sulfur-carrier protein]-C-terminal Gly-Gly + ATP + H(+) = [molybdopterin-synthase sulfur-carrier protein]-C-terminal Gly-Gly-AMP + diphosphate. It catalyses the reaction [molybdopterin-synthase sulfur-carrier protein]-C-terminal Gly-Gly-AMP + S-sulfanyl-L-cysteinyl-[cysteine desulfurase] + AH2 = [molybdopterin-synthase sulfur-carrier protein]-C-terminal-Gly-aminoethanethioate + L-cysteinyl-[cysteine desulfurase] + A + AMP + 2 H(+). Its pathway is tRNA modification; 5-methoxycarbonylmethyl-2-thiouridine-tRNA biosynthesis. It functions in the pathway cofactor biosynthesis; molybdopterin biosynthesis. Its function is as follows. Plays a central role in 2-thiolation of mcm(5)S(2)U at tRNA wobble positions of cytosolic tRNA(Lys), tRNA(Glu) and tRNA(Gln). Also essential during biosynthesis of the molybdenum cofactor. Acts by mediating the C-terminal thiocarboxylation of sulfur carriers URM1 and MOCS2A. Its N-terminus first activates URM1 and MOCS2A as acyl-adenylates (-COAMP), then the persulfide sulfur on the catalytic cysteine is transferred to URM1 and MOCS2A to form thiocarboxylation (-COSH) of their C-terminus. The reaction probably involves hydrogen sulfide that is generated from the persulfide intermediate and that acts as a nucleophile towards URM1 and MOCS2A. Subsequently, a transient disulfide bond is formed. Does not use thiosulfate as sulfur donor; NFS1 probably acting as a sulfur donor for thiocarboxylation reactions. The chain is Adenylyltransferase and sulfurtransferase MOCS3 from Drosophila virilis (Fruit fly).